Consider the following 155-residue polypeptide: MSEQNSTEMTFQIQRIYTKDISFEAPNAPQVFQKDWQPEVKLDLDTASTQLAEGVYEVVLRVTVTAALGEETAFLCEVQQGGIFSIDGIEGTQMAHCLGAYCPNILFPYARECITSLVSRGTFPQLNLAPVNFDALFMNYLQQQAGEGAEQHQDA.

The protein belongs to the SecB family. As to quaternary structure, homotetramer, a dimer of dimers. One homotetramer interacts with 1 SecA dimer.

Its subcellular location is the cytoplasm. One of the proteins required for the normal export of preproteins out of the cell cytoplasm. It is a molecular chaperone that binds to a subset of precursor proteins, maintaining them in a translocation-competent state. It also specifically binds to its receptor SecA. In Klebsiella pneumoniae subsp. pneumoniae (strain ATCC 700721 / MGH 78578), this protein is Protein-export protein SecB.